Consider the following 365-residue polypeptide: 3-isopropylmalate dehydrogenase (365 aa).

Residues arginine 96, arginine 106, arginine 134, and aspartate 224 each coordinate substrate. Positions 224, 248, and 252 each coordinate Mg(2+). 288 to 300 (GSAPTIAKQNIAN) serves as a coordination point for NAD(+).

It belongs to the isocitrate and isopropylmalate dehydrogenases family. LeuB type 1 subfamily. In terms of assembly, homodimer. It depends on Mg(2+) as a cofactor. The cofactor is Mn(2+).

The protein localises to the cytoplasm. The enzyme catalyses (2R,3S)-3-isopropylmalate + NAD(+) = 4-methyl-2-oxopentanoate + CO2 + NADH. The protein operates within amino-acid biosynthesis; L-leucine biosynthesis; L-leucine from 3-methyl-2-oxobutanoate: step 3/4. In terms of biological role, catalyzes the oxidation of 3-carboxy-2-hydroxy-4-methylpentanoate (3-isopropylmalate) to 3-carboxy-4-methyl-2-oxopentanoate. The product decarboxylates to 4-methyl-2 oxopentanoate. In Dehalococcoides mccartyi (strain ATCC BAA-2266 / KCTC 15142 / 195) (Dehalococcoides ethenogenes (strain 195)), this protein is 3-isopropylmalate dehydrogenase.